Here is an 85-residue protein sequence, read N- to C-terminus: Cell division topological specificity factor (85 aa).

Belongs to the MinE family.

Prevents the cell division inhibition by proteins MinC and MinD at internal division sites while permitting inhibition at polar sites. This ensures cell division at the proper site by restricting the formation of a division septum at the midpoint of the long axis of the cell. The sequence is that of Cell division topological specificity factor from Xylella fastidiosa (strain M23).